The chain runs to 429 residues: Enolase (429 aa).

Q162 lines the (2R)-2-phosphoglycerate pocket. The Proton donor role is filled by E204. The Mg(2+) site is built by D241, E283, and D310. (2R)-2-phosphoglycerate is bound by residues K335, R364, S365, and K386. The Proton acceptor role is filled by K335.

Belongs to the enolase family. Mg(2+) serves as cofactor.

It localises to the cytoplasm. The protein resides in the secreted. The protein localises to the cell surface. It catalyses the reaction (2R)-2-phosphoglycerate = phosphoenolpyruvate + H2O. Its pathway is carbohydrate degradation; glycolysis; pyruvate from D-glyceraldehyde 3-phosphate: step 4/5. Its function is as follows. Catalyzes the reversible conversion of 2-phosphoglycerate (2-PG) into phosphoenolpyruvate (PEP). It is essential for the degradation of carbohydrates via glycolysis. This chain is Enolase, found in Mycolicibacterium gilvum (strain PYR-GCK) (Mycobacterium gilvum (strain PYR-GCK)).